Reading from the N-terminus, the 901-residue chain is Sperm-associated antigen 1 (901 aa).

TPR repeat units follow at residues 213–246 (ANREKGKGNEAFYSGDYEEAVMYYTRSLSALPTA), 247–279 (IAYNNRAQAEIKLQRWSSALEDCEKALELDPGN), and 280–313 (VKALLRRATTYKHQNKLQEAVDDLRKVLQVEPDN). The tract at residues 322-437 (EVERDLKNSE…DNPSGLKRRG (116 aa)) is disordered. S351 and S359 each carry phosphoserine. 5 TPR repeats span residues 430–464 (PSGLKRRGNELFRGGQFAEAAAQYSVAIAQLEPTG), 472–505 (SILYSNRAACYLKEGNCRDCIQDCNRALELHPFS), 507–539 (KPLLRRAMAYETLEQYRNAYVDYKTVLQIDCGI), 606–639 (FQALKEEGNQLVKDKNYKDAISKYNECLKINSKA), and 640–673 (CAIYTNRALCYLKLGQFEEAKLDCEQALQIDGEN). Residues 694–776 (GVDPSQVLLS…AEPAEKLDVS (83 aa)) form a disordered region. S703 is subject to Phosphoserine. The span at 708–717 (EAARHLDTKN) shows a compositional bias: basic and acidic residues. Phosphoserine is present on residues S739 and S740. 756–763 (PARDGVED) contributes to the GTP binding site. Position 766 is a phosphoserine (S766).

Detected in cerebellum, tongue, esophagus, forestomach, sperm and testis.

The protein resides in the cytoplasm. It is found in the dynein axonemal particle. Functionally, may play a role in the cytoplasmic assembly of the ciliary dynein arms. May play a role in fertilization. Binds GTP and has GTPase activity. This Mus musculus (Mouse) protein is Sperm-associated antigen 1 (Spag1).